We begin with the raw amino-acid sequence, 146 residues long: Large ribosomal subunit protein uL24z (146 aa).

2 disordered regions span residues Met1–Arg26 and Lys121–Asp146. Positions Ser9–His18 are enriched in basic residues. A compositionally biased stretch (basic and acidic residues) spans Lys121–Ser138.

It belongs to the universal ribosomal protein uL24 family.

The chain is Large ribosomal subunit protein uL24z (RPL26A) from Arabidopsis thaliana (Mouse-ear cress).